The primary structure comprises 398 residues: Enoyl-[acyl-carrier-protein] reductase [NADH] (398 aa).

Residues 48-53 (GSSTGY), 74-75 (FE), 111-112 (DA), and 139-140 (LA) each bind NAD(+). Tyr225 contacts substrate. Tyr235 (proton donor) is an active-site residue. NAD(+)-binding positions include Lys244 and 273-275 (VVT).

The protein belongs to the TER reductase family. In terms of assembly, monomer.

It carries out the reaction a 2,3-saturated acyl-[ACP] + NAD(+) = a (2E)-enoyl-[ACP] + NADH + H(+). The protein operates within lipid metabolism; fatty acid biosynthesis. Its function is as follows. Involved in the final reduction of the elongation cycle of fatty acid synthesis (FAS II). Catalyzes the reduction of a carbon-carbon double bond in an enoyl moiety that is covalently linked to an acyl carrier protein (ACP). The chain is Enoyl-[acyl-carrier-protein] reductase [NADH] from Pseudomonas paraeruginosa (strain DSM 24068 / PA7) (Pseudomonas aeruginosa (strain PA7)).